The following is a 340-amino-acid chain: Pre-mRNA-splicing factor cwf17 (340 aa).

WD repeat units lie at residues 48–87 (GHTA…KNYG), 91–130 (GCKG…KIRK), 133–173 (GHAG…CIKT), 175–214 (EEKY…CSHV), 217–256 (GHKD…SAQR), 267–306 (GQEH…RYVL), and 308–339 (GHEG…LGEL).

As to quaternary structure, belongs to the 40S cdc5-associated complex (or cwf complex), a spliceosome sub-complex reminiscent of a late-stage spliceosome composed of the U2, U5 and U6 snRNAs and at least brr2, cdc5, cwf2/prp3, cwf3/syf1, cwf4/syf3, cwf5/ecm2, spp42/cwf6, cwf7/spf27, cwf8, cwf9, cwf10, cwf11, cwf12, prp45/cwf13, cwf14, cwf15, cwf16, cwf17, cwf18, cwf19, cwf20, cwf21, cwf22, cwf23, cwf24, cwf25, cwf26, cyp7/cwf27, cwf28, cwf29/ist3, lea1, msl1, prp5/cwf1, prp10, prp12/sap130, prp17, prp22, sap61, sap62, sap114, sap145, slu7, smb1, smd1, smd3, smf1, smg1 and syf2.

Its subcellular location is the nucleus. Involved in mRNA splicing where it associates with cdc5 and the other cwf proteins as part of the spliceosome. The sequence is that of Pre-mRNA-splicing factor cwf17 (cwf17) from Schizosaccharomyces pombe (strain 972 / ATCC 24843) (Fission yeast).